The sequence spans 199 residues: Imidazole glycerol phosphate synthase subunit HisH (199 aa).

The region spanning 3–199 (NITIIDTGCA…LKNFVEKVPF (197 aa)) is the Glutamine amidotransferase type-1 domain. The Nucleophile role is filled by cysteine 78. Catalysis depends on residues histidine 178 and glutamate 180.

As to quaternary structure, heterodimer of HisH and HisF.

The protein localises to the cytoplasm. It catalyses the reaction 5-[(5-phospho-1-deoxy-D-ribulos-1-ylimino)methylamino]-1-(5-phospho-beta-D-ribosyl)imidazole-4-carboxamide + L-glutamine = D-erythro-1-(imidazol-4-yl)glycerol 3-phosphate + 5-amino-1-(5-phospho-beta-D-ribosyl)imidazole-4-carboxamide + L-glutamate + H(+). The enzyme catalyses L-glutamine + H2O = L-glutamate + NH4(+). Its pathway is amino-acid biosynthesis; L-histidine biosynthesis; L-histidine from 5-phospho-alpha-D-ribose 1-diphosphate: step 5/9. Its function is as follows. IGPS catalyzes the conversion of PRFAR and glutamine to IGP, AICAR and glutamate. The HisH subunit catalyzes the hydrolysis of glutamine to glutamate and ammonia as part of the synthesis of IGP and AICAR. The resulting ammonia molecule is channeled to the active site of HisF. The sequence is that of Imidazole glycerol phosphate synthase subunit HisH (hisH) from Haemophilus influenzae (strain ATCC 51907 / DSM 11121 / KW20 / Rd).